The sequence spans 135 residues: Large ribosomal subunit protein eL27y (135 aa).

Belongs to the eukaryotic ribosomal protein eL27 family.

In Arabidopsis thaliana (Mouse-ear cress), this protein is Large ribosomal subunit protein eL27y (RPL27B).